Here is a 185-residue protein sequence, read N- to C-terminus: Elongation factor P (185 aa).

It belongs to the elongation factor P family.

It is found in the cytoplasm. The protein operates within protein biosynthesis; polypeptide chain elongation. Its function is as follows. Involved in peptide bond synthesis. Stimulates efficient translation and peptide-bond synthesis on native or reconstituted 70S ribosomes in vitro. Probably functions indirectly by altering the affinity of the ribosome for aminoacyl-tRNA, thus increasing their reactivity as acceptors for peptidyl transferase. The polypeptide is Elongation factor P (Methylobacillus flagellatus (strain ATCC 51484 / DSM 6875 / VKM B-1610 / KT)).